The sequence spans 435 residues: Tol-Pal system protein TolB (435 aa).

The signal sequence occupies residues 1-20 (MRKIIAGVFIFVFLISNLYA).

This sequence belongs to the TolB family. In terms of assembly, the Tol-Pal system is composed of five core proteins: the inner membrane proteins TolA, TolQ and TolR, the periplasmic protein TolB and the outer membrane protein Pal. They form a network linking the inner and outer membranes and the peptidoglycan layer.

The protein localises to the periplasm. Functionally, part of the Tol-Pal system, which plays a role in outer membrane invagination during cell division and is important for maintaining outer membrane integrity. In Francisella tularensis subsp. tularensis (strain WY96-3418), this protein is Tol-Pal system protein TolB.